A 57-amino-acid chain; its full sequence is Metallothionein-2 (57 aa).

Residues 1–28 (PDPCCNDKCDCKEGECKTGCKCTSCRCP) form a beta region. A divalent metal cation contacts are provided by C4, C5, C9, C11, C16, C20, C22, C25, C27, C30, C33, C37, C39, C45, C49, C53, C55, and C56. Residues 29–57 (PCEQCSSGCKCANKEDCRKTCSKPCSCCP) form an alpha region.

The protein belongs to the metallothionein superfamily. Type 3 family.

In terms of biological role, metallothioneins have a high content of cysteine residues that bind various heavy metals. Class I MTS in marine crustacea are involved in the sequestration of elevated levels of heavy-metal ions. The chain is Metallothionein-2 from Scylla serrata (Mud crab).